Reading from the N-terminus, the 127-residue chain is Large ribosomal subunit protein bL12 (127 aa).

This sequence belongs to the bacterial ribosomal protein bL12 family. Homodimer. Part of the ribosomal stalk of the 50S ribosomal subunit. Forms a multimeric L10(L12)X complex, where L10 forms an elongated spine to which 2 to 4 L12 dimers bind in a sequential fashion. Binds GTP-bound translation factors.

In terms of biological role, forms part of the ribosomal stalk which helps the ribosome interact with GTP-bound translation factors. Is thus essential for accurate translation. The protein is Large ribosomal subunit protein bL12 of Desulforapulum autotrophicum (strain ATCC 43914 / DSM 3382 / VKM B-1955 / HRM2) (Desulfobacterium autotrophicum).